Consider the following 369-residue polypeptide: Biglycan (369 aa).

The first 16 residues, 1 to 16 (MCPLWLLTLLLALSQA), serve as a signal peptide directing secretion. The propeptide occupies 17–37 (LPFEQKGFWDFTLDDGLLMMN). O-linked (Xyl...) (glycosaminoglycan) serine glycosylation is found at Ser42 and Ser48. 2 disulfides stabilise this stretch: Cys64-Cys70 and Cys68-Cys77. 12 LRR repeats span residues 83–103 (KTVP…NNDI), 104–127 (SELR…NNKI), 128–151 (SKIH…KNHL), 152–172 (VEIP…DNRI), 173–196 (RKVP…GNPL), 197–221 (ENSG…EAKL), 222–242 (TGIP…HNKI), 243–266 (QAIE…HNQI), 267–290 (RMIE…NNKL), 291–313 (SRVP…SNNI), 314–343 (TKVG…NNPV), and 344–369 (PYWE…NYKK). 2 N-linked (GlcNAc...) asparagine glycosylation sites follow: Asn271 and Asn312. A disulfide bond links Cys322 and Cys355.

The protein belongs to the small leucine-rich proteoglycan (SLRP) family. SLRP class I subfamily. Post-translationally, the two attached glycosaminoglycan chains can be either chondroitin sulfate or dermatan sulfate. As to expression, found in several connective tissues, especially in articular cartilages.

The protein localises to the secreted. It is found in the extracellular space. Its subcellular location is the extracellular matrix. May be involved in collagen fiber assembly. The polypeptide is Biglycan (Bgn) (Mus musculus (Mouse)).